We begin with the raw amino-acid sequence, 75 residues long: Metallothionein-like protein 1B (75 aa).

The protein belongs to the metallothionein superfamily. Type 15 family.

Functionally, metallothioneins have a high content of cysteine residues that bind various heavy metals. In Vicia faba (Broad bean), this protein is Metallothionein-like protein 1B (MT1B).